Reading from the N-terminus, the 300-residue chain is Acetaldehyde dehydrogenase (300 aa).

11 to 14 (SGNI) contributes to the NAD(+) binding site. Residue cysteine 129 is the Acyl-thioester intermediate of the active site. NAD(+) is bound by residues 160-168 (SVGPGTRQN) and asparagine 271.

This sequence belongs to the acetaldehyde dehydrogenase family.

The enzyme catalyses acetaldehyde + NAD(+) + CoA = acetyl-CoA + NADH + H(+). This is Acetaldehyde dehydrogenase (mhpF) from Pseudoalteromonas translucida (strain TAC 125).